We begin with the raw amino-acid sequence, 607 residues long: ATP-dependent DNA helicase II subunit 1 (607 aa).

The 212-residue stretch at 241–452 (MDLGNDVRIG…IETMQRILRG (212 aa)) folds into the Ku domain. The SAP domain maps to 570–604 (IKALKVSQLKDILRDRGLRVSGKKADLLDNLTNYV).

It belongs to the ku70 family. Heterodimer of pku70 and pku80.

The protein localises to the nucleus. The protein resides in the chromosome. It is found in the telomere. It carries out the reaction ATP + H2O = ADP + phosphate + H(+). Its function is as follows. Single-stranded DNA-dependent ATP-dependent helicase. Involved in non-homologous end joining (NHEJ) DNA double strand break repair. DNA-binding is sequence-independent but has a high affinity to nicks in double-stranded DNA and to the ends of duplex DNA. Binds to naturally occurring chromosomal ends, and therefore provides chromosomal end protection. Required also for telomere recombination to repair telomeric ends in the absence of telomerase. ku70, of the ku70/ku80 heterodimer, binds to the stem loop of tlc1, the RNA component of telomerase. Required for mating-type switching. Involved in telomere maintenance. Interacts with telomeric repeats and subtelomeric sequences thereby controlling telomere length and protecting against subtelomeric rearrangement. Maintains telomeric chromatin, which is involved in silencing the expression of genes located at the telomere. This chain is ATP-dependent DNA helicase II subunit 1 (pku70), found in Schizosaccharomyces pombe (strain 972 / ATCC 24843) (Fission yeast).